The sequence spans 144 residues: UPF0179 protein PF1381 (144 aa).

The protein belongs to the UPF0179 family.

This chain is UPF0179 protein PF1381, found in Pyrococcus furiosus (strain ATCC 43587 / DSM 3638 / JCM 8422 / Vc1).